The following is a 276-amino-acid chain: Large ribosomal subunit protein uL2 (276 aa).

Positions 223–276 (GVAMNPVDHPHGGGEGRGKGHHPTSPWGLPTKGYKTRRGKRPSDKFIVRRRNEV) are disordered. Basic and acidic residues-rich tracts occupy residues 230–240 (DHPHGGGEGRG) and 263–276 (RPSD…RNEV).

The protein belongs to the universal ribosomal protein uL2 family. In terms of assembly, part of the 50S ribosomal subunit. Forms a bridge to the 30S subunit in the 70S ribosome.

In terms of biological role, one of the primary rRNA binding proteins. Required for association of the 30S and 50S subunits to form the 70S ribosome, for tRNA binding and peptide bond formation. It has been suggested to have peptidyltransferase activity; this is somewhat controversial. Makes several contacts with the 16S rRNA in the 70S ribosome. The chain is Large ribosomal subunit protein uL2 from Thermotoga neapolitana (strain ATCC 49049 / DSM 4359 / NBRC 107923 / NS-E).